Here is a 648-residue protein sequence, read N- to C-terminus: Threonine--tRNA ligase (648 aa).

A TGS domain is found at 1 to 63 (MAQISLTFPD…HADATIAIHT (63 aa)). A catalytic region spans residues 247-544 (DHRKLGREMD…LIENSAGKLP (298 aa)). C344, H395, and H521 together coordinate Zn(2+).

This sequence belongs to the class-II aminoacyl-tRNA synthetase family. As to quaternary structure, homodimer. Zn(2+) is required as a cofactor.

The protein resides in the cytoplasm. The catalysed reaction is tRNA(Thr) + L-threonine + ATP = L-threonyl-tRNA(Thr) + AMP + diphosphate + H(+). In terms of biological role, catalyzes the attachment of threonine to tRNA(Thr) in a two-step reaction: L-threonine is first activated by ATP to form Thr-AMP and then transferred to the acceptor end of tRNA(Thr). Also edits incorrectly charged L-seryl-tRNA(Thr). This Roseobacter denitrificans (strain ATCC 33942 / OCh 114) (Erythrobacter sp. (strain OCh 114)) protein is Threonine--tRNA ligase.